Reading from the N-terminus, the 695-residue chain is Probable serine/threonine-protein kinase DDB_G0279405 (695 aa).

2 disordered regions span residues 119 to 138 (IVAQ…PQPQ) and 149 to 192 (QIPT…KRHK). Positions 124–138 (QPQPQPQPQPQPQPQ) are enriched in pro residues. Residues 149–160 (QIPTTPPQQISQ) are compositionally biased toward low complexity. Over residues 161 to 173 (FNITGNKSPSSIG) the composition is skewed to polar residues. Positions 201–462 (YVFVRKLGKG…IAEIKSHKWT (262 aa)) constitute a Protein kinase domain. Residues 207–215 (LGKGTFGKV) and lysine 230 each bind ATP. The active-site Proton acceptor is aspartate 329. Residues 491–580 (TDHTIKPSDN…NQNQNNNNNS (90 aa)) form a disordered region. The segment covering 510-528 (LSSSSGGESSGIIGSSNES) has biased composition (low complexity). Polar residues predominate over residues 529–541 (KSMYNNVNSKQKI). Low complexity predominate over residues 542–580 (QNQNQNQNQNQNQNQNQNQNQNHNQNQNQNQNQNNNNNS).

The protein belongs to the protein kinase superfamily. Ser/Thr protein kinase family.

It carries out the reaction L-seryl-[protein] + ATP = O-phospho-L-seryl-[protein] + ADP + H(+). The catalysed reaction is L-threonyl-[protein] + ATP = O-phospho-L-threonyl-[protein] + ADP + H(+). The protein is Probable serine/threonine-protein kinase DDB_G0279405 of Dictyostelium discoideum (Social amoeba).